Here is a 256-residue protein sequence, read N- to C-terminus: 4-hydroxy-tetrahydrodipicolinate reductase (256 aa).

8–13 provides a ligand contact to NAD(+); the sequence is GATGRV. K36 contributes to the NADP(+) binding site. NAD(+) is bound by residues 89-91 and 113-116; these read GTT and ATNM. Residue H145 is the Proton donor/acceptor of the active site. H146 serves as a coordination point for (S)-2,3,4,5-tetrahydrodipicolinate. K149 (proton donor) is an active-site residue. 155 to 156 is a binding site for (S)-2,3,4,5-tetrahydrodipicolinate; sequence GT.

The protein belongs to the DapB family.

It is found in the cytoplasm. The enzyme catalyses (S)-2,3,4,5-tetrahydrodipicolinate + NAD(+) + H2O = (2S,4S)-4-hydroxy-2,3,4,5-tetrahydrodipicolinate + NADH + H(+). It carries out the reaction (S)-2,3,4,5-tetrahydrodipicolinate + NADP(+) + H2O = (2S,4S)-4-hydroxy-2,3,4,5-tetrahydrodipicolinate + NADPH + H(+). It functions in the pathway amino-acid biosynthesis; L-lysine biosynthesis via DAP pathway; (S)-tetrahydrodipicolinate from L-aspartate: step 4/4. Functionally, catalyzes the conversion of 4-hydroxy-tetrahydrodipicolinate (HTPA) to tetrahydrodipicolinate. This is 4-hydroxy-tetrahydrodipicolinate reductase from Wolinella succinogenes (strain ATCC 29543 / DSM 1740 / CCUG 13145 / JCM 31913 / LMG 7466 / NCTC 11488 / FDC 602W) (Vibrio succinogenes).